We begin with the raw amino-acid sequence, 247 residues long: ATP synthase subunit a, chloroplastic (247 aa).

Transmembrane regions (helical) follow at residues 38–58 (QVLI…IVTV), 95–115 (VPFI…GALL), 134–154 (INTT…AGLS), 199–219 (LVVV…VMFL), and 220–240 (GLFT…AYIG).

Belongs to the ATPase A chain family. In terms of assembly, F-type ATPases have 2 components, CF(1) - the catalytic core - and CF(0) - the membrane proton channel. CF(1) has five subunits: alpha(3), beta(3), gamma(1), delta(1), epsilon(1). CF(0) has four main subunits: a, b, b' and c.

The protein localises to the plastid. It localises to the chloroplast thylakoid membrane. Its function is as follows. Key component of the proton channel; it plays a direct role in the translocation of protons across the membrane. This is ATP synthase subunit a, chloroplastic from Populus alba (White poplar).